The sequence spans 1108 residues: AP-3 complex subunit beta (1108 aa).

HEAT repeat units follow at residues 90–127 (DSALLSINTIQKSLNDQSQVIRASALRVMSSIRVIDII), 327–363 (IEAQKVGKSLVRILRSGPEVQYITLTNISTMVTLRPS), 397–433 (ENIGKILKEFKEYVKNEDKKFVAATIQAIGSCASTVP), and 434–471 (DVTESCIYGLMSLLSNQSTVVVAESVIVLKRLLQLNAT). Residues 480–490 (KEKEKEKDVKE) show a composition bias toward basic and acidic residues. Disordered stretches follow at residues 480–501 (KEKEKEKDVKENQSTISKHSSS), 736–797 (DEEE…YDGE), and 811–835 (LFGITNDDNNQTANGIGGGGSGEEE). Acidic residues-rich tracts occupy residues 736–764 (DEEEEDEEEYDEEEEEEEYEEQNEYEDFF) and 780–797 (YDEDEYNQDIDDGEYDGE).

It belongs to the adaptor complexes large subunit family. In terms of assembly, adaptor protein complex 3 (AP-3) is a heterotetramer composed of two large adaptins (delta-type subunit and beta-type subunit), a medium adaptin (mu-type subunit) and a small adaptin (sigma-type subunit).

The protein localises to the endosome membrane. Functionally, part of the AP-3 complex, an adaptor-related complex which is essential for the compartmentalization of the endocytic pathway. The polypeptide is AP-3 complex subunit beta (ap3b-1) (Dictyostelium discoideum (Social amoeba)).